The chain runs to 138 residues: Acidic phospholipase A2 Tpu-E6a (138 aa).

An N-terminal signal peptide occupies residues 1–16 (MRTLWIMAVLLLGVKG). Cystine bridges form between Cys-42-Cys-131, Cys-44-Cys-60, Cys-59-Cys-111, Cys-65-Cys-138, Cys-66-Cys-104, Cys-73-Cys-97, and Cys-91-Cys-102. Residues Tyr-43, Gly-45, and Gly-47 each coordinate Ca(2+). His-63 is an active-site residue. Residue Asp-64 coordinates Ca(2+). Residue Asp-105 is part of the active site.

In terms of assembly, monomer. The cofactor is Ca(2+). In terms of tissue distribution, expressed by the venom gland.

It is found in the secreted. The enzyme catalyses a 1,2-diacyl-sn-glycero-3-phosphocholine + H2O = a 1-acyl-sn-glycero-3-phosphocholine + a fatty acid + H(+). Snake venom phospholipase A2 (PLA2) that impairs hemostasis. It weakly inhibits ADP-induced platelet aggregation when tested on platelet rich plasma from human and rabbit blood (15-25% of inhibition at 5-10 ug of enzyme), and dose-dependently inhibits blood coagulation, possibly by inhibiting thrombin activation. Exhibits high hydrolytic activities toward L-dipalmitoyl phosphatidylcholine. PLA2 catalyzes the calcium-dependent hydrolysis of the 2-acyl groups in 3-sn-phosphoglycerides. The protein is Acidic phospholipase A2 Tpu-E6a of Craspedocephalus puniceus (Flat-nosed pitviper).